The sequence spans 166 residues: Fer3-like protein (166 aa).

The segment at 57-88 is disordered; that stretch reads FEEGDPEEEECEVDQGDGEEEEEEERGRGVSL. The segment covering 60 to 80 has biased composition (acidic residues); the sequence is GDPEEEECEVDQGDGEEEEEE. Residues 101-153 form the bHLH domain; the sequence is AQRQAANIRERKRMFNLNEAFDQLRRKVPTFAYEKRLSRIETLRLAIVYISFM.

As to quaternary structure, heterodimer with TCF3/E12. Interacts with the bHLH domain of TCF3/E12.

Its subcellular location is the nucleus. Functionally, transcription factor that binds to the E-box and functions as inhibitor of transcription. DNA binding requires dimerization with an E protein. Inhibits transcription activation by ASCL1/MASH1 by sequestering E proteins. This is Fer3-like protein (FERD3L) from Homo sapiens (Human).